A 239-amino-acid polypeptide reads, in one-letter code: Ribulose-phosphate 3-epimerase (239 aa).

S9 lines the substrate pocket. Residues H34, D36, and H78 each coordinate a divalent metal cation. The Proton acceptor role is filled by D36. Substrate-binding positions include H78, 154–157, 183–185, and 205–207; these read GFGG, DGG, and GTS. An a divalent metal cation-binding site is contributed by D183. Catalysis depends on D183, which acts as the Proton donor.

It belongs to the ribulose-phosphate 3-epimerase family. Requires Co(2+) as cofactor. Fe(2+) serves as cofactor. It depends on Mn(2+) as a cofactor. Zn(2+) is required as a cofactor.

The enzyme catalyses D-ribulose 5-phosphate = D-xylulose 5-phosphate. It participates in carbohydrate degradation; pentose phosphate pathway; D-xylulose 5-phosphate from D-ribulose 5-phosphate (non-oxidative stage): step 1/1. In terms of biological role, catalyzes the reversible epimerization of D-ribulose 5-phosphate to D-xylulose 5-phosphate. In Eremothecium gossypii (strain ATCC 10895 / CBS 109.51 / FGSC 9923 / NRRL Y-1056) (Yeast), this protein is Ribulose-phosphate 3-epimerase (RPE1).